Reading from the N-terminus, the 118-residue chain is UPF0102 protein Sde_3146 (118 aa).

This sequence belongs to the UPF0102 family.

In Saccharophagus degradans (strain 2-40 / ATCC 43961 / DSM 17024), this protein is UPF0102 protein Sde_3146.